Reading from the N-terminus, the 239-residue chain is 1-(5-phosphoribosyl)-5-[(5-phosphoribosylamino)methylideneamino] imidazole-4-carboxamide isomerase (239 aa).

Residue Asp-8 is the Proton acceptor of the active site. Asp-129 acts as the Proton donor in catalysis.

It belongs to the HisA/HisF family.

The protein resides in the cytoplasm. It catalyses the reaction 1-(5-phospho-beta-D-ribosyl)-5-[(5-phospho-beta-D-ribosylamino)methylideneamino]imidazole-4-carboxamide = 5-[(5-phospho-1-deoxy-D-ribulos-1-ylimino)methylamino]-1-(5-phospho-beta-D-ribosyl)imidazole-4-carboxamide. The protein operates within amino-acid biosynthesis; L-histidine biosynthesis; L-histidine from 5-phospho-alpha-D-ribose 1-diphosphate: step 4/9. This Bacillus cytotoxicus (strain DSM 22905 / CIP 110041 / 391-98 / NVH 391-98) protein is 1-(5-phosphoribosyl)-5-[(5-phosphoribosylamino)methylideneamino] imidazole-4-carboxamide isomerase.